A 156-amino-acid chain; its full sequence is S-ribosylhomocysteine lyase (156 aa).

Histidine 56, histidine 60, and cysteine 123 together coordinate Fe cation.

The protein belongs to the LuxS family. In terms of assembly, homodimer. The cofactor is Fe cation.

It carries out the reaction S-(5-deoxy-D-ribos-5-yl)-L-homocysteine = (S)-4,5-dihydroxypentane-2,3-dione + L-homocysteine. Its function is as follows. Involved in the synthesis of autoinducer 2 (AI-2) which is secreted by bacteria and is used to communicate both the cell density and the metabolic potential of the environment. The regulation of gene expression in response to changes in cell density is called quorum sensing. Catalyzes the transformation of S-ribosylhomocysteine (RHC) to homocysteine (HC) and 4,5-dihydroxy-2,3-pentadione (DPD). The polypeptide is S-ribosylhomocysteine lyase (Staphylococcus aureus (strain bovine RF122 / ET3-1)).